A 180-amino-acid polypeptide reads, in one-letter code: Large ribosomal subunit protein uL6 (180 aa).

The protein belongs to the universal ribosomal protein uL6 family. In terms of assembly, part of the 50S ribosomal subunit.

This protein binds to the 23S rRNA, and is important in its secondary structure. It is located near the subunit interface in the base of the L7/L12 stalk, and near the tRNA binding site of the peptidyltransferase center. The chain is Large ribosomal subunit protein uL6 from Clostridium botulinum (strain Okra / Type B1).